Reading from the N-terminus, the 215-residue chain is uncharacterized protein (215 aa).

2 disordered regions span residues 1–144 (MPKG…PYLR) and 156–215 (IQGH…GAPA). Low complexity-rich tracts occupy residues 16–29 (ASTP…ASPT), 49–58 (SSSWPKSPIK), 85–96 (SGSSSPGPSSSR), and 104–127 (STAA…RAAP).

This is an uncharacterized protein from Homo sapiens (Human).